The following is a 384-amino-acid chain: Organic solute transporter alpha-like protein 1 (384 aa).

At Met1 to Thr38 the chain is on the extracellular side. N-linked (GlcNAc...) asparagine glycans are attached at residues Asn11 and Asn28. A helical transmembrane segment spans residues Ile39–Leu59. Residues Lys60–Asp70 lie on the Cytoplasmic side of the membrane. Residues Met71–Ile91 form a helical membrane-spanning segment. Topologically, residues Pro92–Arg93 are extracellular. The chain crosses the membrane as a helical span at residues Ala94 to Val114. Over Thr115–Glu165 the chain is Cytoplasmic. The helical transmembrane segment at Trp166 to Ser186 threads the bilayer. Residues Met187–Gln202 are Extracellular-facing. Residues Leu203–Gly223 traverse the membrane as a helical segment. Over Arg224–Asp240 the chain is Cytoplasmic. Residues Ile241–Leu261 form a helical membrane-spanning segment. The Extracellular portion of the chain corresponds to Ile262–Lys273. A helical transmembrane segment spans residues Ala274–Ser294. The Cytoplasmic portion of the chain corresponds to Tyr295 to Gln384.

Belongs to the OST-alpha family.

The protein localises to the cell membrane. Probable transporter. The chain is Organic solute transporter alpha-like protein 1 (osta-1) from Caenorhabditis elegans.